Reading from the N-terminus, the 137-residue chain is Large ribosomal subunit protein uL11 (137 aa).

The protein belongs to the universal ribosomal protein uL11 family. As to quaternary structure, part of the ribosomal stalk of the 50S ribosomal subunit. Interacts with L10 and the large rRNA to form the base of the stalk. L10 forms an elongated spine to which L12 dimers bind in a sequential fashion forming a multimeric L10(L12)X complex. Post-translationally, one or more lysine residues are methylated.

Its function is as follows. Forms part of the ribosomal stalk which helps the ribosome interact with GTP-bound translation factors. This is Large ribosomal subunit protein uL11 from Mycoplasma pneumoniae (strain ATCC 29342 / M129 / Subtype 1) (Mycoplasmoides pneumoniae).